The following is a 563-amino-acid chain: MGLQACLLGLFALILSGKCSYSPEPDQRRTLPPGWVSLGRADPEEELSLTFALRQQNVERLSELVQAVSDPSSPQYGKYLTLENVADLVRPSPLTLRTVQKWLLAAGARKCHSVITQDFLTCWLSIRQAELLLPGAEFHHYVGGPTETHVVRSPHPYQLPQALAPHVDFVGGLHRFPPTSSLRQRPEPQVTGTVGLHLGVTPSVIRKRYNLTSQDVGSGTSNNSQACAQFLEQYFHDSDLAQFMRLFGGNFAHQASVARVVGQQGRGRAGIEASLDVQYLMSAGANISTWVYSSPGRHEGQEPFLQWLMLLSNESALPHVHTVSYGDDEDSLSSAYIQRVNTELMKAAARGLTLLFASGDSGAGCWSVSGRHQFRPTFPASSPYVTTVGGTSFQEPFLITNEIVDYISGGGFSNVFPRPSYQEEAVTKFLSSSPHLPPSSYFNASGRAYPDVAALSDGYWVVSNRVPIPWVSGTSASTPVFGGILSLINEHRILSGRPPLGFLNPRLYQQHGAGLFDVTRGCHESCLDEEVEGQGFCSGPGWDPVTGWGTPNFPALLKTLLNP.

The N-terminal stretch at 1-19 is a signal peptide; the sequence is MGLQACLLGLFALILSGKC. A propeptide spans 20–195 (removed in mature form); that stretch reads SYSPEPDQRR…PEPQVTGTVG (176 aa). A disulfide bridge links Cys-111 with Cys-122. Residues 199–563 enclose the Peptidase S53 domain; it reads GVTPSVIRKR…PALLKTLLNP (365 aa). 2 N-linked (GlcNAc...) asparagine glycosylation sites follow: Asn-210 and Asn-222. Catalysis depends on charge relay system residues Glu-272 and Asp-276. N-linked (GlcNAc...) asparagine glycans are attached at residues Asn-286, Asn-313, and Asn-443. 2 disulfide bridges follow: Cys-365/Cys-526 and Cys-522/Cys-537. The active-site Charge relay system is Ser-475. Ca(2+)-binding residues include Asp-517 and Val-518. The Ca(2+) site is built by Gly-539, Gly-541, and Asp-543.

In terms of assembly, monomer. Interacts with CLN5. Interacts with CLN3. The cofactor is Ca(2+). Post-translationally, activated by autocatalytic proteolytical processing upon acidification. N-glycosylation is required for processing and activity.

The protein localises to the lysosome. It is found in the melanosome. It carries out the reaction Release of an N-terminal tripeptide from a polypeptide, but also has endopeptidase activity.. Its function is as follows. Lysosomal serine protease with tripeptidyl-peptidase I activity. May act as a non-specific lysosomal peptidase which generates tripeptides from the breakdown products produced by lysosomal proteinases. Requires substrates with an unsubstituted N-terminus. The polypeptide is Tripeptidyl-peptidase 1 (TPP1) (Pan troglodytes (Chimpanzee)).